The chain runs to 383 residues: Dual-specificity RNA methyltransferase RlmN (383 aa).

Glutamate 95 (proton acceptor) is an active-site residue. Positions 101 to 349 constitute a Radical SAM core domain; it reads EETRGTLCVS…TTVRKTRGDD (249 aa). A disulfide bridge links cysteine 108 with cysteine 354. Residues cysteine 115, cysteine 119, and cysteine 122 each coordinate [4Fe-4S] cluster. Residues 180-181, serine 212, 234-236, and asparagine 311 contribute to the S-adenosyl-L-methionine site; these read GE and SLH. Residue cysteine 354 is the S-methylcysteine intermediate of the active site.

Belongs to the radical SAM superfamily. RlmN family. [4Fe-4S] cluster serves as cofactor.

It localises to the cytoplasm. The catalysed reaction is adenosine(2503) in 23S rRNA + 2 reduced [2Fe-2S]-[ferredoxin] + 2 S-adenosyl-L-methionine = 2-methyladenosine(2503) in 23S rRNA + 5'-deoxyadenosine + L-methionine + 2 oxidized [2Fe-2S]-[ferredoxin] + S-adenosyl-L-homocysteine. It catalyses the reaction adenosine(37) in tRNA + 2 reduced [2Fe-2S]-[ferredoxin] + 2 S-adenosyl-L-methionine = 2-methyladenosine(37) in tRNA + 5'-deoxyadenosine + L-methionine + 2 oxidized [2Fe-2S]-[ferredoxin] + S-adenosyl-L-homocysteine. Its function is as follows. Specifically methylates position 2 of adenine 2503 in 23S rRNA and position 2 of adenine 37 in tRNAs. m2A2503 modification seems to play a crucial role in the proofreading step occurring at the peptidyl transferase center and thus would serve to optimize ribosomal fidelity. The sequence is that of Dual-specificity RNA methyltransferase RlmN from Paraburkholderia phytofirmans (strain DSM 17436 / LMG 22146 / PsJN) (Burkholderia phytofirmans).